The primary structure comprises 581 residues: Major facilitator superfamily multidrug transporter NAG4 (581 aa).

A compositionally biased stretch (polar residues) spans 1-14 (MSHATDSTLDNASV). Positions 1–43 (MSHATDSTLDNASVDSEKVRDFGDDLQNHPVQPTRSILSKIRS) are disordered. The N-linked (GlcNAc...) asparagine glycan is linked to asparagine 11. Positions 15–27 (DSEKVRDFGDDLQ) are enriched in basic and acidic residues. N-linked (GlcNAc...) asparagine glycosylation occurs at asparagine 125. The next 12 membrane-spanning stretches (helical) occupy residues 132–152 (WLYT…SAIV), 169–189 (VIIL…PLVF), 199–219 (KPIY…CGAA), 230–250 (LIDG…LADI), 261–281 (AIFS…GGLL), 290–310 (WIYW…IAIV), 365–385 (IVFL…MFFF), 403–423 (GVMF…APFF), 447–467 (LIPM…FAWS), 471–491 (WVSW…FCCL), 510–530 (ALAA…LFTI), and 544–564 (LMAF…FFGA).

This sequence belongs to the major facilitator superfamily. DHA1 family. Polyamines/proton antiporter (TC 2.A.1.2.16) subfamily.

Its subcellular location is the cell membrane. Functionally, MFS transporter involved in N-acetylglucosamine (GlcNAc) uptake. Confers resistance to cycloheximide, 4-nitroquinoline-N-oxide, and 1,10-phenanthroline, and contributes to virulence. The chain is Major facilitator superfamily multidrug transporter NAG4 from Candida albicans (strain SC5314 / ATCC MYA-2876) (Yeast).